A 311-amino-acid polypeptide reads, in one-letter code: tRNA dimethylallyltransferase (311 aa).

Position 19–26 (19–26 (GPSGSGKS)) interacts with ATP. A substrate-binding site is contributed by 21–26 (SGSGKS). Residues 44-47 (DSLS) form an interaction with substrate tRNA region.

It belongs to the IPP transferase family. Monomer. Requires Mg(2+) as cofactor.

It carries out the reaction adenosine(37) in tRNA + dimethylallyl diphosphate = N(6)-dimethylallyladenosine(37) in tRNA + diphosphate. Functionally, catalyzes the transfer of a dimethylallyl group onto the adenine at position 37 in tRNAs that read codons beginning with uridine, leading to the formation of N6-(dimethylallyl)adenosine (i(6)A). In Helicobacter pylori (strain ATCC 700392 / 26695) (Campylobacter pylori), this protein is tRNA dimethylallyltransferase.